The following is a 422-amino-acid chain: Pristinamycin IIA synthase subunit A (422 aa).

FMN is bound by residues aspartate 59, threonine 101, histidine 151, tyrosine 155, serine 206, and serine 207.

It belongs to the NtaA/SnaA/DszA monooxygenase family. Heterodimer of two subunits, SnaA and SnaB. FMN is required as a cofactor.

Its function is as follows. Catalyzes the oxidation of the proline residue of pristinamycin IIB (PIIB) to pristinamycin IIA (PIIA). In Streptomyces pristinaespiralis, this protein is Pristinamycin IIA synthase subunit A (snaA).